The chain runs to 122 residues: uncharacterized protein (122 aa).

Helical transmembrane passes span tryptophan 14–valine 34 and isoleucine 83–isoleucine 103.

It localises to the cell membrane. This is an uncharacterized protein from Ureaplasma parvum serovar 3 (strain ATCC 700970).